The primary structure comprises 196 residues: Nucleoid occlusion factor SlmA (196 aa).

Residues 7–68 enclose the HTH tetR-type domain; that stretch reads PNRRDEILQA…GLIEFIEESI (62 aa). The segment at residues 31–50 is a DNA-binding region (H-T-H motif); that stretch reads TTAKLAKQVGVSEAALYRHF. The stretch at 71 to 93 forms a coiled coil; that stretch reads RVNRILEDEKDTLKRIELLLKLL.

This sequence belongs to the nucleoid occlusion factor SlmA family. In terms of assembly, homodimer. Interacts with FtsZ.

It is found in the cytoplasm. Its subcellular location is the nucleoid. In terms of biological role, required for nucleoid occlusion (NO) phenomenon, which prevents Z-ring formation and cell division over the nucleoid. Acts as a DNA-associated cell division inhibitor that binds simultaneously chromosomal DNA and FtsZ, and disrupts the assembly of FtsZ polymers. SlmA-DNA-binding sequences (SBS) are dispersed on non-Ter regions of the chromosome, preventing FtsZ polymerization at these regions. This chain is Nucleoid occlusion factor SlmA, found in Aliivibrio fischeri (strain MJ11) (Vibrio fischeri).